The sequence spans 352 residues: Ion-translocating oxidoreductase complex subunit D (352 aa).

A run of 4 helical transmembrane segments spans residues 20–40, 42–62, 69–91, and 123–143; these read IMLL…WFFG, GTLF…AIVL, VASH…SIPP, and PAMI…TSWL. FMN phosphoryl threonine is present on T187. Transmembrane regions (helical) follow at residues 215–235, 242–262, 267–287, 301–321, and 322–342; these read LAGV…VFLL, WHIP…GWLF, LASP…FFIL, LIFG…GGYP, and DGVA…DYYT.

It belongs to the NqrB/RnfD family. As to quaternary structure, the complex is composed of six subunits: RsxA, RsxB, RsxC, RsxD, RsxE and RsxG. FMN serves as cofactor.

The protein localises to the cell inner membrane. Part of a membrane-bound complex that couples electron transfer with translocation of ions across the membrane. Required to maintain the reduced state of SoxR. In Salmonella paratyphi B (strain ATCC BAA-1250 / SPB7), this protein is Ion-translocating oxidoreductase complex subunit D.